The primary structure comprises 826 residues: MELNRRDFMKANAAIAAAAAAGITIPVKNVQAADDGIRWDKAPCRYCGTGCSVLVGTKDGRVVATQGDPDAEVNRGLNCIKGYFLSKIMYGADRVQQPLLRMKDGKFDKEGDFTPISWEQAFTIMAEKIKDILKKKEPNAIGMFSSGQTTIYEGYAKVKLWKAGLRSNTIDPNARHCMASAAVAFMRTFGMDEPMGCYNDIEKADTFVLWGSNMAEMHPILWSRISDRRLSGDNVKVVVMSTYEHRSFELADTPIIFKPQSDLAILNYIANYIIQNDKVDWDFVNKHTKFKRGETNIGYGLRPEHPLQQGTNAKTAGKMYDSDFEEFKKIVSEYTLDKAHEISGVPKDQLETLAKMYADPEQNLVSYWTMGFNQHTRGVWVNQMMYNVHLLTGKISKPGCGPFSLTGQPSACGTAREVGTFIHRLPADMVVTNPKHVAKAEEIWQLPAGTIPTVPGFHAVAQSRALKDGKLNFLWQMCTNNMQGGPNINEETFPGWRNPENFIVVSDPYPSTSAVAADLILPTCMWVEKEGGYGNAERRTQLWRQQVKGPGESRSDLWQIVEFSKYFKTDEVWSEELLAQKPEYRGKTLYEVLYKNGEVDKFQVPTNIPGYINDEADHFGFYLQKGLFEEYASFGRGHGHDLAPFDVYHQVRGLRWPVVDGKETLWRYREGYDPYVKSGEEVAFYGNPDNKAIILGVPYEAPAESPDEEYDLWLCTGRVLEHWHTGTMTRRVPELHKAFPNNLVWMHPTDAKKRGLRHGDKVKLITRRGEMISHLDTRGRNKTPEGLIFTTFFDAGQLTNKLTLDATDPISFETDYKKCAVKVVKA.

Residues 1–32 (MELNRRDFMKANAAIAAAAAAGITIPVKNVQA) constitute a signal peptide (tat-type signal). The region spanning 37–93 (IRWDKAPCRYCGTGCSVLVGTKDGRVVATQGDPDAEVNRGLNCIKGYFLSKIMYGAD) is the 4Fe-4S Mo/W bis-MGD-type domain. [4Fe-4S] cluster contacts are provided by cysteine 44, cysteine 47, cysteine 51, and cysteine 79. Mo-bis(molybdopterin guanine dinucleotide) is bound by residues lysine 81, glutamine 148, asparagine 173, cysteine 177, 210 to 217 (WGSNMAEM), 241 to 245 (STYEH), 260 to 262 (QSD), methionine 370, glutamine 374, asparagine 480, 506 to 507 (SD), lysine 529, aspartate 556, and 716 to 725 (TGRVLEHWHT). Residue phenylalanine 792 participates in substrate binding. Positions 800 and 817 each coordinate Mo-bis(molybdopterin guanine dinucleotide).

The protein belongs to the prokaryotic molybdopterin-containing oxidoreductase family. NasA/NapA/NarB subfamily. As to quaternary structure, component of the periplasmic nitrate reductase NapAB complex composed of NapA and NapB. The cofactor is [4Fe-4S] cluster. Mo-bis(molybdopterin guanine dinucleotide) serves as cofactor. Predicted to be exported by the Tat system. The position of the signal peptide cleavage has not been experimentally proven.

Its subcellular location is the periplasm. It catalyses the reaction 2 Fe(II)-[cytochrome] + nitrate + 2 H(+) = 2 Fe(III)-[cytochrome] + nitrite + H2O. Its function is as follows. Catalytic subunit of the periplasmic nitrate reductase complex NapAB. Receives electrons from NapB and catalyzes the reduction of nitrate to nitrite. This chain is Periplasmic nitrate reductase, found in Actinobacillus succinogenes (strain ATCC 55618 / DSM 22257 / CCUG 43843 / 130Z).